Consider the following 156-residue polypeptide: Regulatory protein RecX (156 aa).

Belongs to the RecX family.

It localises to the cytoplasm. In terms of biological role, modulates RecA activity. The protein is Regulatory protein RecX of Pseudomonas putida (strain ATCC 47054 / DSM 6125 / CFBP 8728 / NCIMB 11950 / KT2440).